The following is a 576-amino-acid chain: Protein NRT1/ PTR FAMILY 2.12 (576 aa).

11 consecutive transmembrane segments (helical) span residues 58-78, 89-109, 130-150, 176-196, 203-223, 329-349, 364-384, 406-426, 441-461, 475-495, and 522-542; these read FNVYYLWMGLTNFAPLLGALI, IAYASLFSILGLMTVTLTACL, KLQLGILFLGLGFLSIGSGGI, FFNWYYLTLTMVLIFSHTVVV, WVIGFSIPTSLMACAVVLFFV, VWSAGIISIVAMTTQATFMVF, IPAASITVISYITIGIWVPIY, MGIGIVFAILSMFTAGFVEGV, WLALPLILMGLCESFNFIGLI, IANSLFPLSFAAANYLSSLLV, and YFYYLIAVLGVVNLVYFWYCA.

This sequence belongs to the major facilitator superfamily. Proton-dependent oligopeptide transporter (POT/PTR) (TC 2.A.17) family. As to expression, expressed in flowers and siliques. Expressed in vascular bundle of the siliques and in funiculus.

It localises to the cell membrane. In terms of biological role, low-affinity proton-dependent nitrate transporter. Not involved in dipeptides transport. Involved in delivering nitrate for seed development. The sequence is that of Protein NRT1/ PTR FAMILY 2.12 (NPF2.12) from Arabidopsis thaliana (Mouse-ear cress).